The primary structure comprises 473 residues: Ribulose bisphosphate carboxylase large chain (473 aa).

A propeptide spanning residues 1-2 (MS) is cleaved from the precursor. Pro-3 carries the post-translational modification N-acetylproline. Lys-14 is modified (N6,N6,N6-trimethyllysine). 2 residues coordinate substrate: Asn-123 and Thr-173. The active-site Proton acceptor is the Lys-175. Lys-177 contacts substrate. The Mg(2+) site is built by Lys-201, Asp-203, and Glu-204. Residue Lys-201 is modified to N6-carboxylysine. The active-site Proton acceptor is His-294. Positions 295, 327, and 379 each coordinate substrate.

It belongs to the RuBisCO large chain family. Type I subfamily. In terms of assembly, heterohexadecamer of 8 large chains and 8 small chains; disulfide-linked. The disulfide link is formed within the large subunit homodimers. Mg(2+) is required as a cofactor. Post-translationally, the disulfide bond which can form in the large chain dimeric partners within the hexadecamer appears to be associated with oxidative stress and protein turnover.

The protein localises to the plastid. It is found in the chloroplast. The enzyme catalyses 2 (2R)-3-phosphoglycerate + 2 H(+) = D-ribulose 1,5-bisphosphate + CO2 + H2O. The catalysed reaction is D-ribulose 1,5-bisphosphate + O2 = 2-phosphoglycolate + (2R)-3-phosphoglycerate + 2 H(+). In terms of biological role, ruBisCO catalyzes two reactions: the carboxylation of D-ribulose 1,5-bisphosphate, the primary event in carbon dioxide fixation, as well as the oxidative fragmentation of the pentose substrate in the photorespiration process. Both reactions occur simultaneously and in competition at the same active site. The sequence is that of Ribulose bisphosphate carboxylase large chain from Sesbania sesban (Egyptian riverhemp).